The chain runs to 161 residues: Cyclic pyranopterin monophosphate synthase (161 aa).

Substrate is bound by residues Leu75–His77 and Met113–Glu114. Asp128 is a catalytic residue.

This sequence belongs to the MoaC family. In terms of assembly, homohexamer; trimer of dimers.

It catalyses the reaction (8S)-3',8-cyclo-7,8-dihydroguanosine 5'-triphosphate = cyclic pyranopterin phosphate + diphosphate. It functions in the pathway cofactor biosynthesis; molybdopterin biosynthesis. Catalyzes the conversion of (8S)-3',8-cyclo-7,8-dihydroguanosine 5'-triphosphate to cyclic pyranopterin monophosphate (cPMP). The chain is Cyclic pyranopterin monophosphate synthase from Salmonella dublin (strain CT_02021853).